Reading from the N-terminus, the 190-residue chain is Holliday junction branch migration complex subunit RuvA (190 aa).

Residues 1–65 (MIGNLSGIVD…ENVAQLYGFI (65 aa)) are domain I. The domain II stretch occupies residues 66–143 (SKEEQQCLRL…KLEINNNNFH (78 aa)). The flexible linker stretch occupies residues 144-147 (PINE). The interval 147-190 (EDALSALINLGYEKMKAYDTIKKYRPNLDTKDIIRMALKELSIL) is domain III.

Belongs to the RuvA family. As to quaternary structure, homotetramer. Forms an RuvA(8)-RuvB(12)-Holliday junction (HJ) complex. HJ DNA is sandwiched between 2 RuvA tetramers; dsDNA enters through RuvA and exits via RuvB. An RuvB hexamer assembles on each DNA strand where it exits the tetramer. Each RuvB hexamer is contacted by two RuvA subunits (via domain III) on 2 adjacent RuvB subunits; this complex drives branch migration. In the full resolvosome a probable DNA-RuvA(4)-RuvB(12)-RuvC(2) complex forms which resolves the HJ.

The protein localises to the cytoplasm. The RuvA-RuvB-RuvC complex processes Holliday junction (HJ) DNA during genetic recombination and DNA repair, while the RuvA-RuvB complex plays an important role in the rescue of blocked DNA replication forks via replication fork reversal (RFR). RuvA specifically binds to HJ cruciform DNA, conferring on it an open structure. The RuvB hexamer acts as an ATP-dependent pump, pulling dsDNA into and through the RuvAB complex. HJ branch migration allows RuvC to scan DNA until it finds its consensus sequence, where it cleaves and resolves the cruciform DNA. This Wolbachia pipientis wMel protein is Holliday junction branch migration complex subunit RuvA.